Here is a 326-residue protein sequence, read N- to C-terminus: Beta-ketoacyl-[acyl-carrier-protein] synthase III (326 aa).

Catalysis depends on residues C112 and H251. The ACP-binding stretch occupies residues 252–256 (QANSR). Residue N281 is part of the active site.

The protein belongs to the thiolase-like superfamily. FabH family. As to quaternary structure, homodimer.

It is found in the cytoplasm. It carries out the reaction malonyl-[ACP] + acetyl-CoA + H(+) = 3-oxobutanoyl-[ACP] + CO2 + CoA. It participates in lipid metabolism; fatty acid biosynthesis. Functionally, catalyzes the condensation reaction of fatty acid synthesis by the addition to an acyl acceptor of two carbons from malonyl-ACP. Catalyzes the first condensation reaction which initiates fatty acid synthesis and may therefore play a role in governing the total rate of fatty acid production. Possesses both acetoacetyl-ACP synthase and acetyl transacylase activities. Its substrate specificity determines the biosynthesis of branched-chain and/or straight-chain of fatty acids. This is Beta-ketoacyl-[acyl-carrier-protein] synthase III from Clostridium botulinum (strain Okra / Type B1).